The following is a 346-amino-acid chain: MANAYKQAGVDIEAGYEAVSRMKKHVQTTMRKEVLGGLGGFGGMFDLSKFALEEPVLVSGTDGVGTKLMLAFMADKHDTIGIDAVAMCVNDIVVQGAEPLFFLDYIACGKAEPSKIENIVKGISEGCRQAGCALIGGETAEMPGMYSTEEYDLAGFTVGIVDKKKIITGEKIEAGHVLIGLASSGIHSNGYSLVRKVLLEDGELSLERIYGRLELPLGEELLKPTKIYVKPILELLKKHEVYGMAHITGGGFIENIPRMLPEGIGAEIELGSWKIQPIFSLLQEVGNLEEKDMFNIFNMGIGMVVAVKEEDAKDVVRLLEEQGETARIIGRTIQGAGVTFNGGTAL.

This sequence belongs to the AIR synthase family.

It is found in the cytoplasm. It catalyses the reaction 2-formamido-N(1)-(5-O-phospho-beta-D-ribosyl)acetamidine + ATP = 5-amino-1-(5-phospho-beta-D-ribosyl)imidazole + ADP + phosphate + H(+). Its pathway is purine metabolism; IMP biosynthesis via de novo pathway; 5-amino-1-(5-phospho-D-ribosyl)imidazole from N(2)-formyl-N(1)-(5-phospho-D-ribosyl)glycinamide: step 2/2. The sequence is that of Phosphoribosylformylglycinamidine cyclo-ligase from Bacillus cereus (strain G9842).